The primary structure comprises 316 residues: Aspartate carbamoyltransferase catalytic subunit (316 aa).

Residues Arg-66 and Thr-67 each contribute to the carbamoyl phosphate site. Lys-94 is an L-aspartate binding site. Arg-116, His-146, and Gln-149 together coordinate carbamoyl phosphate. L-aspartate is bound by residues Arg-180 and Arg-235. Residues Gly-276 and Pro-277 each contribute to the carbamoyl phosphate site.

This sequence belongs to the aspartate/ornithine carbamoyltransferase superfamily. ATCase family. Heterododecamer (2C3:3R2) of six catalytic PyrB chains organized as two trimers (C3), and six regulatory PyrI chains organized as three dimers (R2).

It catalyses the reaction carbamoyl phosphate + L-aspartate = N-carbamoyl-L-aspartate + phosphate + H(+). It functions in the pathway pyrimidine metabolism; UMP biosynthesis via de novo pathway; (S)-dihydroorotate from bicarbonate: step 2/3. Its function is as follows. Catalyzes the condensation of carbamoyl phosphate and aspartate to form carbamoyl aspartate and inorganic phosphate, the committed step in the de novo pyrimidine nucleotide biosynthesis pathway. This is Aspartate carbamoyltransferase catalytic subunit from Stenotrophomonas maltophilia (strain K279a).